We begin with the raw amino-acid sequence, 358 residues long: Phosphoribosyl pyrophosphate synthase-associated protein 2 (358 aa).

It belongs to the ribose-phosphate pyrophosphokinase family.

Functionally, seems to play a negative regulatory role in 5-phosphoribose 1-diphosphate synthesis. In Xenopus tropicalis (Western clawed frog), this protein is Phosphoribosyl pyrophosphate synthase-associated protein 2 (prpsap2).